The chain runs to 332 residues: GTP 3',8-cyclase (332 aa).

In terms of domain architecture, Radical SAM core spans 9 to 220 (RFARKVDYLR…DQVRERIAER (212 aa)). Arg-18 contacts GTP. The [4Fe-4S] cluster site is built by Cys-25 and Cys-29. Tyr-31 contributes to the S-adenosyl-L-methionine binding site. Position 32 (Cys-32) interacts with [4Fe-4S] cluster. Arg-67 is a binding site for GTP. Gly-71 lines the S-adenosyl-L-methionine pocket. Thr-98 contributes to the GTP binding site. S-adenosyl-L-methionine is bound at residue Ser-122. Lys-159 is a binding site for GTP. Position 193 (Met-193) interacts with S-adenosyl-L-methionine. [4Fe-4S] cluster contacts are provided by Cys-258 and Cys-261. Position 263 to 265 (263 to 265 (RVR)) interacts with GTP. Cys-275 contributes to the [4Fe-4S] cluster binding site.

It belongs to the radical SAM superfamily. MoaA family. Monomer and homodimer. Requires [4Fe-4S] cluster as cofactor.

It catalyses the reaction GTP + AH2 + S-adenosyl-L-methionine = (8S)-3',8-cyclo-7,8-dihydroguanosine 5'-triphosphate + 5'-deoxyadenosine + L-methionine + A + H(+). It participates in cofactor biosynthesis; molybdopterin biosynthesis. Functionally, catalyzes the cyclization of GTP to (8S)-3',8-cyclo-7,8-dihydroguanosine 5'-triphosphate. The protein is GTP 3',8-cyclase of Pseudomonas syringae pv. syringae (strain B728a).